A 264-amino-acid polypeptide reads, in one-letter code: Intermembrane phospholipid transport system ATP-binding protein MlaF (264 aa).

The region spanning 6 to 242 (IEVKNLTFKR…QDLRVVQFLK (237 aa)) is the ABC transporter domain. Residue 38–45 (GPSGIGKT) participates in ATP binding.

This sequence belongs to the ABC transporter superfamily. MlaF family. As to quaternary structure, the complex is composed of two ATP-binding proteins (MlaF), two transmembrane proteins (MlaE), two cytoplasmic solute-binding proteins (MlaB) and six periplasmic solute-binding proteins (MlaD).

The protein resides in the cell inner membrane. Part of the ABC transporter complex MlaFEDB, which is involved in a phospholipid transport pathway that maintains lipid asymmetry in the outer membrane by retrograde trafficking of phospholipids from the outer membrane to the inner membrane. Responsible for energy coupling to the transport system. The sequence is that of Intermembrane phospholipid transport system ATP-binding protein MlaF from Haemophilus influenzae (strain ATCC 51907 / DSM 11121 / KW20 / Rd).